Here is a 109-residue protein sequence, read N- to C-terminus: Phosphoribosyl-AMP cyclohydrolase (109 aa).

Residue Asp-80 coordinates Mg(2+). Cys-81 provides a ligand contact to Zn(2+). 2 residues coordinate Mg(2+): Asp-82 and Asp-84. Residues Cys-97 and Cys-104 each contribute to the Zn(2+) site.

This sequence belongs to the PRA-CH family. As to quaternary structure, homodimer. Mg(2+) serves as cofactor. Zn(2+) is required as a cofactor.

Its subcellular location is the cytoplasm. It catalyses the reaction 1-(5-phospho-beta-D-ribosyl)-5'-AMP + H2O = 1-(5-phospho-beta-D-ribosyl)-5-[(5-phospho-beta-D-ribosylamino)methylideneamino]imidazole-4-carboxamide. It functions in the pathway amino-acid biosynthesis; L-histidine biosynthesis; L-histidine from 5-phospho-alpha-D-ribose 1-diphosphate: step 3/9. Catalyzes the hydrolysis of the adenine ring of phosphoribosyl-AMP. This Clostridium botulinum (strain Alaska E43 / Type E3) protein is Phosphoribosyl-AMP cyclohydrolase.